The sequence spans 240 residues: Probable transcriptional regulatory protein PBPRB1582 (240 aa).

Belongs to the TACO1 family.

It is found in the cytoplasm. The polypeptide is Probable transcriptional regulatory protein PBPRB1582 (Photobacterium profundum (strain SS9)).